The sequence spans 246 residues: UDP-2,3-diacylglucosamine hydrolase (246 aa).

The Mn(2+) site is built by Asp8, His10, Asp41, Asn79, and His114. Residue 79–80 coordinates substrate; that stretch reads NR. Substrate contacts are provided by Asp122, Ser160, Lys164, Lys167, and His195. Mn(2+) contacts are provided by His195 and His197.

Belongs to the LpxH family. Requires Mn(2+) as cofactor.

Its subcellular location is the cell inner membrane. It carries out the reaction UDP-2-N,3-O-bis[(3R)-3-hydroxytetradecanoyl]-alpha-D-glucosamine + H2O = 2-N,3-O-bis[(3R)-3-hydroxytetradecanoyl]-alpha-D-glucosaminyl 1-phosphate + UMP + 2 H(+). It functions in the pathway glycolipid biosynthesis; lipid IV(A) biosynthesis; lipid IV(A) from (3R)-3-hydroxytetradecanoyl-[acyl-carrier-protein] and UDP-N-acetyl-alpha-D-glucosamine: step 4/6. Its function is as follows. Hydrolyzes the pyrophosphate bond of UDP-2,3-diacylglucosamine to yield 2,3-diacylglucosamine 1-phosphate (lipid X) and UMP by catalyzing the attack of water at the alpha-P atom. Involved in the biosynthesis of lipid A, a phosphorylated glycolipid that anchors the lipopolysaccharide to the outer membrane of the cell. The protein is UDP-2,3-diacylglucosamine hydrolase of Tolumonas auensis (strain DSM 9187 / NBRC 110442 / TA 4).